The chain runs to 272 residues: tRNA pseudouridine synthase B (272 aa).

Asp38 functions as the Nucleophile in the catalytic mechanism.

It belongs to the pseudouridine synthase TruB family. Type 1 subfamily.

The enzyme catalyses uridine(55) in tRNA = pseudouridine(55) in tRNA. Functionally, responsible for synthesis of pseudouridine from uracil-55 in the psi GC loop of transfer RNAs. The protein is tRNA pseudouridine synthase B of Campylobacter jejuni subsp. jejuni serotype O:6 (strain 81116 / NCTC 11828).